Here is a 256-residue protein sequence, read N- to C-terminus: Small ribosomal subunit protein eS1 (256 aa).

At Ala2 the chain carries N-acetylalanine; partial.

This sequence belongs to the eukaryotic ribosomal protein eS1 family. As to quaternary structure, component of the small ribosomal subunit. Mature ribosomes consist of a small (40S) and a large (60S) subunit. The 40S subunit contains about 33 different proteins and 1 molecule of RNA (18S). The 60S subunit contains about 49 different proteins and 3 molecules of RNA (25S, 5.8S and 5S).

The protein localises to the cytoplasm. The sequence is that of Small ribosomal subunit protein eS1 from Komagataella phaffii (strain GS115 / ATCC 20864) (Yeast).